Here is a 538-residue protein sequence, read N- to C-terminus: Chaperonin GroEL 1 (538 aa).

Residues 29-32 (TLGP), 86-90 (DGTTT), Gly-413, 478-480 (NAA), and Asp-494 contribute to the ATP site.

This sequence belongs to the chaperonin (HSP60) family. Forms a cylinder of 14 subunits composed of two heptameric rings stacked back-to-back. Interacts with the co-chaperonin GroES.

Its subcellular location is the cytoplasm. It carries out the reaction ATP + H2O + a folded polypeptide = ADP + phosphate + an unfolded polypeptide.. Its function is as follows. Together with its co-chaperonin GroES, plays an essential role in assisting protein folding. The GroEL-GroES system forms a nano-cage that allows encapsulation of the non-native substrate proteins and provides a physical environment optimized to promote and accelerate protein folding. In Corynebacterium glutamicum (strain R), this protein is Chaperonin GroEL 1.